Consider the following 320-residue polypeptide: Aspartate carbamoyltransferase catalytic subunit (320 aa).

Residues Arg68 and Thr69 each coordinate carbamoyl phosphate. Lys96 contacts L-aspartate. Carbamoyl phosphate contacts are provided by Arg118, His148, and Gln151. Residues Arg181 and Arg236 each contribute to the L-aspartate site. Positions 277 and 278 each coordinate carbamoyl phosphate.

Belongs to the aspartate/ornithine carbamoyltransferase superfamily. ATCase family. In terms of assembly, heterododecamer (2C3:3R2) of six catalytic PyrB chains organized as two trimers (C3), and six regulatory PyrI chains organized as three dimers (R2).

It catalyses the reaction carbamoyl phosphate + L-aspartate = N-carbamoyl-L-aspartate + phosphate + H(+). Its pathway is pyrimidine metabolism; UMP biosynthesis via de novo pathway; (S)-dihydroorotate from bicarbonate: step 2/3. In terms of biological role, catalyzes the condensation of carbamoyl phosphate and aspartate to form carbamoyl aspartate and inorganic phosphate, the committed step in the de novo pyrimidine nucleotide biosynthesis pathway. This chain is Aspartate carbamoyltransferase catalytic subunit, found in Leptothrix cholodnii (strain ATCC 51168 / LMG 8142 / SP-6) (Leptothrix discophora (strain SP-6)).